Here is a 623-residue protein sequence, read N- to C-terminus: DNA-directed RNA polymerase subunit gamma (623 aa).

Zn(2+) is bound by residues cysteine 70, cysteine 72, cysteine 85, and cysteine 88. Residues aspartate 466, aspartate 468, and aspartate 470 each coordinate Mg(2+).

It belongs to the RNA polymerase beta' chain family. RpoC1 subfamily. As to quaternary structure, in cyanobacteria the RNAP catalytic core is composed of 2 alpha, 1 beta, 1 beta', 1 gamma and 1 omega subunit. When a sigma factor is associated with the core the holoenzyme is formed, which can initiate transcription. It depends on Mg(2+) as a cofactor. Zn(2+) is required as a cofactor.

The catalysed reaction is RNA(n) + a ribonucleoside 5'-triphosphate = RNA(n+1) + diphosphate. In terms of biological role, DNA-dependent RNA polymerase catalyzes the transcription of DNA into RNA using the four ribonucleoside triphosphates as substrates. The protein is DNA-directed RNA polymerase subunit gamma of Acaryochloris marina (strain MBIC 11017).